Here is a 946-residue protein sequence, read N- to C-terminus: Structure-specific endonuclease subunit SLX4 (946 aa).

Pro residues predominate over residues 1 to 14 (MPASPLPALSPPAS). 7 disordered regions span residues 1–35 (MPAS…IPPD), 54–119 (QHFD…EEAV), 147–318 (PSDE…GGFT), 339–399 (ADSA…AAQL), 416–471 (TKVP…PKHI), 577–748 (FPLL…GSGR), and 765–799 (ALSP…KADS). Positions 54–74 (QHFDDDIAGKDQEQSRKKSPE) are enriched in basic and acidic residues. 2 stretches are compositionally biased toward basic residues: residues 160–169 (KAGKPRKPRA) and 182–195 (KPKR…KAAK). The segment covering 278–287 (AVSRRRDWTP) has biased composition (basic and acidic residues). Positions 453–469 (SKARSKKASTKAAAKPK) are enriched in basic residues. Over residues 627–636 (KANDEPDHVM) the composition is skewed to basic and acidic residues. A compositionally biased stretch (polar residues) spans 707 to 717 (KSQSAIATSGS). The segment covering 722-733 (KEPKRTKGKEVK) has biased composition (basic and acidic residues).

It belongs to the SLX4 family. As to quaternary structure, forms a heterodimer with SLX1. In terms of processing, phosphorylated in response to DNA damage.

Its subcellular location is the nucleus. Its function is as follows. Regulatory subunit of the SLX1-SLX4 structure-specific endonuclease that resolves DNA secondary structures generated during DNA repair and recombination. Has endonuclease activity towards branched DNA substrates, introducing single-strand cuts in duplex DNA close to junctions with ss-DNA. This is Structure-specific endonuclease subunit SLX4 from Phaeosphaeria nodorum (strain SN15 / ATCC MYA-4574 / FGSC 10173) (Glume blotch fungus).